The chain runs to 552 residues: Leucine-rich repeat-containing protein 31 (552 aa).

The segment at 1-65 (MSQTRKKTSS…SETAKPLSSE (65 aa)) is disordered. A compositionally biased stretch (basic and acidic residues) spans 31–41 (ESRKEDNDLKT). Positions 42 to 58 (SDSQPSDWIQKTATSET) are enriched in polar residues. LRR repeat units follow at residues 227 to 246 (SLEVLDLSINRDIVGSLNSI), 255 to 275 (NLKVLKLHSCGLSQKSVKILD), 283 to 293 (ELRKLDLSCNK), 311 to 331 (HLQVLDLHQCSLTADDVMSLT), 339 to 360 (NLQELDLSANKKMGSSSENLLS), 367 to 387 (ALKSLVINNCALESETFTALA), 395 to 415 (ALEVFNLSWNKCVGGNLKLLL), 423 to 443 (SLQVLRLSSCSLVTEDVALLA), and 453 to 475 (KLQKLDLSYNDSICDAGWTMFCQ).

This chain is Leucine-rich repeat-containing protein 31 (LRRC31), found in Homo sapiens (Human).